We begin with the raw amino-acid sequence, 938 residues long: Myocardin (938 aa).

An MEF2C-binding motif is present at residues 12–27 (IRSKFRSVLQLRLQQR). One copy of the RPEL 1 repeat lies at 18 to 43 (SVLQLRLQQRRTQEQLANQGIIPPLK). The span at 48-61 (FHEQRKHLDSDKAK) shows a compositional bias: basic and acidic residues. A disordered region spans residues 48–68 (FHEQRKHLDSDKAKNSLKRKA). RPEL repeat units lie at residues 62–87 (NSLK…QAST) and 106–131 (DDLN…PVDS). The interval 153–205 (FEEDSSSDGLSPDQTRSEDPQNSAGSPPDAKASDTPSTGSLGTNQDLASGSEN) is HDAC5-binding. The disordered stretch occupies residues 154 to 281 (EEDSSSDGLS…DQKAEKSPPP (128 aa)). Polar residues-rich tracts occupy residues 159-177 (SDGL…NSAG), 186-203 (DTPS…ASGS), and 210-220 (SASQPSHQSDA). Residues 248 to 265 (NRHKKPKDPKPKVKKLKY) show a composition bias toward basic residues. The SAP domain occupies 371-405 (LDDLKVSELRQQLRIRGLPVSGTKTALMDRLRPFQ). Ser-451, Ser-455, Ser-459, and Ser-463 each carry phosphoserine; by GSK3-beta. Residues 516-561 (EKDKMLVEKQKVINELTWKLQQEQRQVEELRMQLQKQKRNNCSEKK) adopt a coiled-coil conformation. Phosphoserine; by GSK3-beta is present on residues Ser-626, Ser-630, Ser-634, and Ser-638. Disordered stretches follow at residues 635–678 (PQHS…SSPI) and 693–734 (SDKV…MTRS). Positions 699 to 715 (KFSIPSPTFSKSSSAIS) are enriched in low complexity. Positions 717 to 938 (VTQPPSYEDA…SSMDLHLQQW (222 aa)) are required for interaction with and ubiquitination by STUB1. Phosphoserine; by MAPK1 and MAPK3 is present on residues Ser-815, Ser-862, and Ser-869. Thr-896 carries the phosphothreonine; by MAPK1 and MAPK3 modification.

As to quaternary structure, homodimer. Interacts with SRF, its association does not depend on specific DNA sequences for ternary complex formation. Interacts with MLLT7/FOXO4. Interacts (via C-terminal) with EP300 (via the CREB-binding domain). Interacts with HDAC4 and HDAC5. Interacts with MEF2C. Interacts (via C-terminus) with STUB1/CHIP. Interacts with PURB. Post-translationally, ubiquitinated; by STUB1/CHIP at the C-terminus, leading to its degradation by the proteasome. Phosphorylation by GSK3B is required for STUB1/CHIP-mediated ubiquitination. In terms of processing, phosphorylation negatively regulates the intrinsic myocardin transcriptional activity. Phosphorylated; by GSK3B. Expressed in the heart, aorta and bladder. Expressed in smooth muscle cell-containing tissues: stomach, small intestine, colon, lung, placenta and uterus. Very faint expression in prostate and skeletal muscle.

The protein localises to the nucleus. Its function is as follows. Smooth muscle cells (SM) and cardiac muscle cells-specific transcriptional factor which uses the canonical single or multiple CArG boxes DNA sequence. Acts as a cofactor of serum response factor (SRF) with the potential to modulate SRF-target genes. Plays a crucial role in cardiogenesis, urinary bladder development, and differentiation of the smooth muscle cell lineage (myogenesis). Positively regulates the transcription of genes involved in vascular smooth muscle contraction. In Homo sapiens (Human), this protein is Myocardin (MYOCD).